A 362-amino-acid chain; its full sequence is 3-isopropylmalate dehydrogenase (362 aa).

77 to 88 is an NAD(+) binding site; it reads GPKWGTGAVRPE. 4 residues coordinate substrate: R95, R105, R134, and D223. Mg(2+) contacts are provided by D223, D248, and D252. NAD(+) is bound at residue 287-298; it reads GSAPDLPPNKVN.

Belongs to the isocitrate and isopropylmalate dehydrogenases family. As to quaternary structure, homodimer. It depends on Mg(2+) as a cofactor. Mn(2+) is required as a cofactor.

The protein resides in the cytoplasm. The enzyme catalyses (2R,3S)-3-isopropylmalate + NAD(+) = 4-methyl-2-oxopentanoate + CO2 + NADH. It functions in the pathway amino-acid biosynthesis; L-leucine biosynthesis; L-leucine from 3-methyl-2-oxobutanoate: step 3/4. Its function is as follows. Catalyzes the oxidation of 3-carboxy-2-hydroxy-4-methylpentanoate (3-isopropylmalate) to 3-carboxy-4-methyl-2-oxopentanoate. The product decarboxylates to 4-methyl-2 oxopentanoate. The chain is 3-isopropylmalate dehydrogenase (LEU2) from Blastobotrys adeninivorans (Yeast).